The primary structure comprises 359 residues: Molybdenum import ATP-binding protein ModC (359 aa).

The ABC transporter domain maps to 1–229; the sequence is MLELNFSQQL…SALRPWLQRE (229 aa). 31 to 38 is a binding site for ATP; sequence GLSGAGKT. The Mop domain maps to 289–354; the sequence is SSSIRNILPV…IKSVSFNRQN (66 aa).

The protein belongs to the ABC transporter superfamily. Molybdate importer (TC 3.A.1.8) family. In terms of assembly, the complex is composed of two ATP-binding proteins (ModC), two transmembrane proteins (ModB) and a solute-binding protein (ModA).

It localises to the cell inner membrane. It carries out the reaction molybdate(out) + ATP + H2O = molybdate(in) + ADP + phosphate + H(+). Its function is as follows. Part of the ABC transporter complex ModABC involved in molybdenum import. Responsible for energy coupling to the transport system. This is Molybdenum import ATP-binding protein ModC from Yersinia pestis bv. Antiqua (strain Antiqua).